The primary structure comprises 446 residues: Neuropeptide Y receptor type 5 (446 aa).

The Extracellular portion of the chain corresponds to 1–42; it reads MGSEIPDYYNKTLASENNTVATRNSGFPVWEDYKGSVDDLQY. Residues N10 and N17 are each glycosylated (N-linked (GlcNAc...) asparagine). A helical membrane pass occupies residues 43 to 63; the sequence is FLIGLYTFVSLLGFMGNLLIL. Over 64 to 77 the chain is Cytoplasmic; sequence MAVMRKRNQKTTVN. The chain crosses the membrane as a helical span at residues 78-98; it reads FLIGNLAFSDILVVLFCSPFT. At 99–117 the chain is on the extracellular side; sequence LTSVLLDQWMFGKVMCHIM. C114 and C198 are oxidised to a cystine. The helical transmembrane segment at 118-138 threads the bilayer; it reads PFLQCVTVLVSTLILISIAIV. The Cytoplasmic portion of the chain corresponds to 139–156; sequence RYHMIKHPVSNNLTANHG. The helical transmembrane segment at 157–177 threads the bilayer; the sequence is YFLIATVWTLGLAICSPLPVF. Residues 178–208 are Extracellular-facing; sequence HSLVELQESFGSAWLSSRYLCVESWPSDSYR. Residues 209-229 form a helical membrane-spanning segment; sequence IAFTISLLLVQYILPLVCLTV. Over 230-369 the chain is Cytoplasmic; sequence SHTSVCRTIS…RKRSRSVFYR (140 aa). Positions 297 to 325 are disordered; that stretch reads RPAPAGPALESREGRPPGKVGSMQSQPPP. Residues 370 to 390 traverse the membrane as a helical segment; it reads LTVLILVFAVSWMPLHLFHVV. The Extracellular segment spans residues 391–407; it reads TDFNDNLISNRHFKLVY. The helical transmembrane segment at 408 to 428 threads the bilayer; sequence CICHLLGMMSCCLNPILYGFL. Residues 429–446 lie on the Cytoplasmic side of the membrane; the sequence is NNGIKADLMSLIHCLHVS. A lipid anchor (S-palmitoyl cysteine) is attached at C442.

Belongs to the G-protein coupled receptor 1 family.

Its subcellular location is the cell membrane. Functionally, receptor for neuropeptide Y and peptide YY. The activity of this receptor is mediated by G proteins that inhibit adenylate cyclase activity. Seems to be associated with food intake. Could be involved in feeding disorders. This is Neuropeptide Y receptor type 5 (NPY5R) from Sus scrofa (Pig).